We begin with the raw amino-acid sequence, 380 residues long: MTAANVPGSSIGVDALPIRENLRGKSAYGAPQLTVPVQLNTNENPHPPTKALVDDVAESVREAARELHRYPDRDAVALRTDLAAYLVRQTGVPVTVDNVWAANGSNEILQQLLQAFGGPGRSAMGFVPSYSMHPIIADGTETEWLPIFRRADFALDVDAATAAIAERRPDVVFVTSPNNPTGHSVGIAELRRVLDSAPGIVIVDEAYAEFSDAPSALTLIDEYPSKLVVSRTMSKAFAFAGGRLGYLAAAPAFIEALLLVRLPYHLSVVTQAAARAALRHANETLGSVHALAAERVRVSKALEDTGFHVIPSDANFILFGEFTDSARAWQAYLDRGVLIRDVGIPGYLRATVGLASENDAFIVASDEIAATELTSSGDRG.

Residue lysine 235 is modified to N6-(pyridoxal phosphate)lysine.

This sequence belongs to the class-II pyridoxal-phosphate-dependent aminotransferase family. Histidinol-phosphate aminotransferase subfamily. As to quaternary structure, homodimer. Pyridoxal 5'-phosphate is required as a cofactor.

It catalyses the reaction L-histidinol phosphate + 2-oxoglutarate = 3-(imidazol-4-yl)-2-oxopropyl phosphate + L-glutamate. Its pathway is amino-acid biosynthesis; L-histidine biosynthesis; L-histidine from 5-phospho-alpha-D-ribose 1-diphosphate: step 7/9. The protein is Histidinol-phosphate aminotransferase of Rhodococcus opacus (strain B4).